We begin with the raw amino-acid sequence, 562 residues long: MVASGFLLIASFMVVLFVLSRPLGGFLARLIEGEPFSALQKVEAGLWRCSGVKNAEMNGWQYALAILCFNLLGIVLLFVLLMTQGSLPLNPEHLPGMSWHLALNTAVSFVTNTNWQAYSGENTLSYLSQMAGLTVQNFLSAATGIAVAFALIRAFARHSATTLGNAWVDLVRITLYVLLPIALIIALIFVSQGVLQNLDGYLHITTLEGVQQTLPMGPVASQEAIKVLGTNGGGFFGANSAHPFENPTAFSNFVQMLAIFLIPCALCFAFGQVVGDNRQGHALIWAMSLIFIVAVVVVMYAELAGNPHLSPLGADSNSNMEGKESRFGILATSLYAVVTTAASCGAVNAMHDSFTALGGMIPLWLMQIGEVVFGGVGSGLYGMLLFVLLTVFIAGLMIGRTPEYLGKKIDVFDMKMTALAILVTPTIVLLGTALALCTEAGRAGILNPGAHGFSEVLYAFSSAANNNGSAFAGLSVNTPFYNLLLAAAMFIGRFGVILPVLAIASSLVAKKRQPAGNGTLPTGGPLFIGLLIGTVLLVGALTFIPALALGPVAEHLQVWLAH.

Helical transmembrane passes span 6-26 (FLLI…LGGF), 62-82 (YALA…VLLM), 132-152 (GLTV…FALI), 175-195 (LYVL…QGVL), 253-273 (FVQM…FGQV), 283-303 (LIWA…YAEL), 327-347 (FGIL…CGAV), 356-376 (ALGG…FGGV), 379-399 (GLYG…LMIG), 416-436 (MTAL…ALAL), 483-503 (LLLA…VLAI), and 526-546 (LFIG…FIPA).

Belongs to the KdpA family. As to quaternary structure, the system is composed of three essential subunits: KdpA, KdpB and KdpC.

Its subcellular location is the cell inner membrane. Functionally, part of the high-affinity ATP-driven potassium transport (or Kdp) system, which catalyzes the hydrolysis of ATP coupled with the electrogenic transport of potassium into the cytoplasm. This subunit binds the periplasmic potassium ions and delivers the ions to the membrane domain of KdpB through an intramembrane tunnel. The sequence is that of Potassium-transporting ATPase potassium-binding subunit from Yersinia pseudotuberculosis serotype IB (strain PB1/+).